A 288-amino-acid polypeptide reads, in one-letter code: Putative movement protein (288 aa).

Residues 207–288 form a disordered region; the sequence is TGPRATLSQP…TSSRSRRVRG (82 aa).

Transports viral genome to neighboring plant cells directly through plasmosdesmata, without any budding. The movement protein allows efficient cell to cell propagation, by bypassing the host cell wall barrier (Potential). The chain is Putative movement protein from Cucumis melo (Muskmelon).